The chain runs to 129 residues: Small ribosomal subunit protein uS9 (129 aa).

The protein belongs to the universal ribosomal protein uS9 family.

The protein is Small ribosomal subunit protein uS9 of Wolinella succinogenes (strain ATCC 29543 / DSM 1740 / CCUG 13145 / JCM 31913 / LMG 7466 / NCTC 11488 / FDC 602W) (Vibrio succinogenes).